The primary structure comprises 465 residues: MVTQATSVRWQLWIVAFGFFMQTLDTTIVNTALPSIAASLGENPLRMQSVIVSYVLTVAVMLPASGWLADRIGVKWVFFSAIILFTFGSLMCAQSATLNELILSRVLQGVGGAMMVPVGRLTVMKIVPREQYMAAMAFVTLPGQIGPLVGPALGGFLVEFASWHWIFLINLPVGVIGALATLLLMPNHKMSTRRFDISGFIMLAIGMATLTLALDGHTGLGLSPLAIAGLILCGVIALGSYWWHALGNRFALFSLHLFKNKIYTLGLVGSMSARIGSGMLPFMTPIFLQIGLGFSPFHAGLMMIPMIIGSMGMKRIIVQVVNRFGYRRVLVNATLLLAVVSLSLPLVAIMGWTLLMPVVLFFQGMLNALRFSTMNTLTLKTLPDRLASSGNSLLSMAMQLSMSIGVSTAGILLGTFAHHQVATNTPATHSAFLYSYLCMAIIIALPALIFNRVPPDTGANRHLAR.

13 helical membrane passes run L12–A32, S49–A69, I72–C92, I102–M124, F138–V158, W165–M185, F195–D215, G219–G239, L267–F287, I290–S310, L342–F362, L393–L413, and S430–F450.

Belongs to the major facilitator superfamily. TCR/Tet family.

Its subcellular location is the cell inner membrane. The sequence is that of Putative multidrug resistance protein MdtD from Yersinia pseudotuberculosis serotype O:1b (strain IP 31758).